A 142-amino-acid polypeptide reads, in one-letter code: Hemoglobin subunit alpha-4 (142 aa).

Residue serine 1 is modified to N-acetylserine. One can recognise a Globin domain in the interval serine 1–arginine 142. Histidine 59 is a binding site for O2. Histidine 88 serves as a coordination point for heme b.

Belongs to the globin family. In terms of assembly, heterotetramer of two alpha chains and two beta chains. Red blood cells.

Involved in oxygen transport from gills to the various peripheral tissues. The polypeptide is Hemoglobin subunit alpha-4 (hba4) (Oncorhynchus mykiss (Rainbow trout)).